The following is a 264-amino-acid chain: Thymidylate synthase (264 aa).

Arg21 provides a ligand contact to dUMP. His51 is a binding site for (6R)-5,10-methylene-5,6,7,8-tetrahydrofolate. 126-127 (RR) provides a ligand contact to dUMP. Cys146 (nucleophile) is an active-site residue. Residues 166–169 (RSCD), Asn177, and 207–209 (HLY) contribute to the dUMP site. Asp169 lines the (6R)-5,10-methylene-5,6,7,8-tetrahydrofolate pocket. Residue Ala263 participates in (6R)-5,10-methylene-5,6,7,8-tetrahydrofolate binding.

It belongs to the thymidylate synthase family. Bacterial-type ThyA subfamily. Homodimer.

It is found in the cytoplasm. It carries out the reaction dUMP + (6R)-5,10-methylene-5,6,7,8-tetrahydrofolate = 7,8-dihydrofolate + dTMP. Its pathway is pyrimidine metabolism; dTTP biosynthesis. Its function is as follows. Catalyzes the reductive methylation of 2'-deoxyuridine-5'-monophosphate (dUMP) to 2'-deoxythymidine-5'-monophosphate (dTMP) while utilizing 5,10-methylenetetrahydrofolate (mTHF) as the methyl donor and reductant in the reaction, yielding dihydrofolate (DHF) as a by-product. This enzymatic reaction provides an intracellular de novo source of dTMP, an essential precursor for DNA biosynthesis. The chain is Thymidylate synthase from Shewanella sp. (strain ANA-3).